The chain runs to 535 residues: Alkaline phosphatase, placental type (535 aa).

An N-terminal signal peptide occupies residues 1–22; sequence MLGPCMLLLLLLLGLRLQLSLG. Asp64 provides a ligand contact to Mg(2+). Zn(2+) is bound by residues Asp64 and Ser114. Catalysis depends on Ser114, which acts as the Phosphoserine intermediate. A disulfide bridge links Cys143 with Cys205. Residue Asn144 is glycosylated (N-linked (GlcNAc...) asparagine). A Mg(2+)-binding site is contributed by Ser177. Glu238 serves as a coordination point for Ca(2+). N-linked (GlcNAc...) asparagine glycosylation is present at Asn271. Positions 291, 292, and 307 each coordinate Ca(2+). Glu333 contributes to the Mg(2+) binding site. Zn(2+) contacts are provided by Asp338, His342, Asp379, and His380. Residues 425–449 are disordered; the sequence is DGARPDVTESESGSPEYRQQSAVPL. Residues 434–446 are compositionally biased toward polar residues; the sequence is SESGSPEYRQQSA. Zn(2+) is bound at residue His454. Cys489 and Cys496 form a disulfide bridge. A lipid anchor (GPI-anchor amidated aspartate) is attached at Asp506. A propeptide spans 507–535 (removed in mature form); sequence AAHPGRSVVPALLPLLAGTLLLLETATAP. Residues 513-529 traverse the membrane as a helical segment; the sequence is SVVPALLPLLAGTLLLL.

This sequence belongs to the alkaline phosphatase family. Homodimer. The cofactor is Mg(2+). Zn(2+) is required as a cofactor. It depends on Ca(2+) as a cofactor. In terms of tissue distribution, detected in placenta (at protein level).

The protein resides in the cell membrane. The catalysed reaction is a phosphate monoester + H2O = an alcohol + phosphate. Its function is as follows. Alkaline phosphatase that can hydrolyze various phosphate compounds. This chain is Alkaline phosphatase, placental type, found in Homo sapiens (Human).